A 195-amino-acid chain; its full sequence is MRQATIQRNTLETKIELSVNLDGTGKADLNTGVPFLEHMLDQIARHGLIDLTIKADGDTHIDDHHTVEDIGISLGMALKEAVGDKKGIKRYGHSYVPLDEALSRVVIDLSGRPGLVFKADFTRASIGGFDTELVAEFFQGFTNHAQATLHIDCLRGKNAHHQAETIFKAFGRALRMALEADERMADQLPSTKGAL.

Belongs to the imidazoleglycerol-phosphate dehydratase family.

It localises to the cytoplasm. The enzyme catalyses D-erythro-1-(imidazol-4-yl)glycerol 3-phosphate = 3-(imidazol-4-yl)-2-oxopropyl phosphate + H2O. It participates in amino-acid biosynthesis; L-histidine biosynthesis; L-histidine from 5-phospho-alpha-D-ribose 1-diphosphate: step 6/9. The polypeptide is Imidazoleglycerol-phosphate dehydratase (Hydrogenovibrio crunogenus (strain DSM 25203 / XCL-2) (Thiomicrospira crunogena)).